The primary structure comprises 179 residues: Orotate phosphoribosyltransferase (179 aa).

5-phospho-alpha-D-ribose 1-diphosphate is bound by residues R94, K95, K98, H100, and 120–128 (EDTSTTGNS). 2 residues coordinate orotate: T124 and R152.

The protein belongs to the purine/pyrimidine phosphoribosyltransferase family. PyrE subfamily. In terms of assembly, homodimer. It depends on Mg(2+) as a cofactor.

The enzyme catalyses orotidine 5'-phosphate + diphosphate = orotate + 5-phospho-alpha-D-ribose 1-diphosphate. Its pathway is pyrimidine metabolism; UMP biosynthesis via de novo pathway; UMP from orotate: step 1/2. In terms of biological role, catalyzes the transfer of a ribosyl phosphate group from 5-phosphoribose 1-diphosphate to orotate, leading to the formation of orotidine monophosphate (OMP). The chain is Orotate phosphoribosyltransferase from Mycobacterium avium (strain 104).